The chain runs to 405 residues: Imidazolonepropionase (405 aa).

The Fe(3+) site is built by H73 and H75. Residues H73 and H75 each coordinate Zn(2+). Residues R82, Y145, and H178 each coordinate 4-imidazolone-5-propanoate. Y145 lines the N-formimidoyl-L-glutamate pocket. H243 is a binding site for Fe(3+). Position 243 (H243) interacts with Zn(2+). Q246 is a binding site for 4-imidazolone-5-propanoate. D318 serves as a coordination point for Fe(3+). D318 contributes to the Zn(2+) binding site. The N-formimidoyl-L-glutamate site is built by N320 and G322. T323 contributes to the 4-imidazolone-5-propanoate binding site.

It belongs to the metallo-dependent hydrolases superfamily. HutI family. The cofactor is Zn(2+). Requires Fe(3+) as cofactor.

It is found in the cytoplasm. The enzyme catalyses 4-imidazolone-5-propanoate + H2O = N-formimidoyl-L-glutamate. The protein operates within amino-acid degradation; L-histidine degradation into L-glutamate; N-formimidoyl-L-glutamate from L-histidine: step 3/3. Catalyzes the hydrolytic cleavage of the carbon-nitrogen bond in imidazolone-5-propanoate to yield N-formimidoyl-L-glutamate. It is the third step in the universal histidine degradation pathway. The sequence is that of Imidazolonepropionase from Brucella anthropi (strain ATCC 49188 / DSM 6882 / CCUG 24695 / JCM 21032 / LMG 3331 / NBRC 15819 / NCTC 12168 / Alc 37) (Ochrobactrum anthropi).